We begin with the raw amino-acid sequence, 293 residues long: Energy-coupling factor transporter ATP-binding protein EcfA2 (293 aa).

An ABC transporter domain is found at 3–246 (ITFQKVEHRY…ADELEKIGVD (244 aa)). Position 40–47 (40–47 (GHTGSGKS)) interacts with ATP.

The protein belongs to the ABC transporter superfamily. Energy-coupling factor EcfA family. Forms a stable energy-coupling factor (ECF) transporter complex composed of 2 membrane-embedded substrate-binding proteins (S component), 2 ATP-binding proteins (A component) and 2 transmembrane proteins (T component).

The protein localises to the cell membrane. In terms of biological role, ATP-binding (A) component of a common energy-coupling factor (ECF) ABC-transporter complex. Unlike classic ABC transporters this ECF transporter provides the energy necessary to transport a number of different substrates. This is Energy-coupling factor transporter ATP-binding protein EcfA2 from Bacillus cereus (strain ZK / E33L).